The sequence spans 449 residues: VIRF-1 (449 aa).

Residues 1–60 (MDPGQRPNPFGAPGAIPKKPCLSQGSPGTSGSGAPCDEPSRSESPGEGPSGTGGSAAAGD) form a disordered region. The IRF tryptophan pentad repeat DNA-binding region spans 89-195 (KASIKDWIVC…HHFLVFRVRK (107 aa)). Residues K406 and K442 each carry the N6-propionyllysine; by host modification.

This sequence belongs to the IRF family. Forms homodimers. Interacts with host IRF3, IRF7, and CREBBP. Interacts with host SYNCRIP. Interacts with host USP7. Interacts (via C-terminus) with host HERC5. Interacts with host GABARAPL1. Interacts with host SIRT6. Post-translationally, ISGylated. Propionylated in lysine residues Lys-406 and Lys-442, which is required for effective inhibition of IFN-beta production and antiviral signaling.

The protein localises to the host cytoplasm. Plays a role in the inhibition of host innate response by repressing the expression of interferon-inducible genes and blocking host IRF1- and IRF3-mediated transcription. Blocks the interaction between host IRF3 and CREBBP. Regulates the host cellular metabolism by increasing glucose uptake, ATP production and lactate secretion through down-regulation of heterogeneous nuclear ribonuclear protein Q1/SYNCRIP. Mechanistically, induces ubiquitination and degradation of SYNCRIP through the ubiquitin-proteasome pathway by recruiting KLHL3/CUL3 ubiquitin ligase complex. Disrupts host TP53 signaling pathway during viral infection by interacting with host USP7 and thereby decreasing the availability of USP7 for deubiquitinating and stabilizing TP53. Plays a role in the global inhibition of protein ISGylation by interacting with host HERC5 leading to its inhibition. Promotes its own propionylation by blocking SIRT6 interaction with ubiquitin-specific peptidase 10/USP10 leading to SIRT6 degradation via a ubiquitin-proteasome pathway. In turn, propionylation is required to block IRF3-CBP/p300 recruitment and to repress the STING DNA sensing pathway. Plays a role in the activation of mitophagy during infection via interaction with the host proteins NIX/BNIP3L, TUFM and GABARAPL1 thereby inhibiting antiviral responses and contributing to productive replication. In Homo sapiens (Human), this protein is VIRF-1 (vIRF-1).